The following is a 1107-amino-acid chain: Copine family protein 1 (1107 aa).

At 1-22 the chain is on the extracellular side; sequence MVFDARLGYDPDEWEECPEPEH. The helical transmembrane segment at 23-45 threads the bilayer; that stretch reads FLVFSGFTRYMLTFAAIAFVYYF. The Cytoplasmic portion of the chain corresponds to 46–1107; sequence FKLLDDKNKK…IRREMMHNPL (1062 aa). Residues 67 to 124 adopt a coiled-coil conformation; that stretch reads VESVLAKAGDKLHDVKEQVQQHIPESAEELMREADQYLKEQAHSVQNNVHQFAEQAAN. The segment covering 478–488 has biased composition (low complexity); it reads QLQQNQQQHQQ. Disordered stretches follow at residues 478 to 501 and 673 to 698; these read QLQQ…TADS and HEPE…SRQV. Positions 492–501 are enriched in basic and acidic residues; that stretch reads IDRRRTTADS. Over residues 687 to 698 the composition is skewed to polar residues; the sequence is KNPSFEATSRQV. One can recognise a VWFA domain in the interval 863–1023; the sequence is NLIFGIDYTA…LSIIVVGVGD (161 aa).

It belongs to the copine family. As to quaternary structure, may interact (via VWFA domain) with unc-89 (via Ig-like C2-type 1-3) and unc-96 (via C-terminus); cpna-1 binding sites for unc-89 and unc-96 are different. May interact with pat-6. May interact with lim-9 (via LIM domains) and with scpl-1 (via FCP1 homology domain). As to expression, expressed in body wall muscles (at protein level).

The protein localises to the basal cell membrane. It localises to the cytoplasm. It is found in the myofibril. Its subcellular location is the sarcomere. The protein resides in the m line. Its function is as follows. Involved in the assembly of dense bodies and M lines during body wall muscle development. Acts by recruiting downstream of integrin-associated protein pat-6/actopaxin several dense bodies and M line components including unc-89, lim-9, scpl-1 and unc-96 to integrin-mediated attachment sites. The polypeptide is Copine family protein 1 (Caenorhabditis elegans).